The following is a 471-amino-acid chain: Cytochrome b-c1 complex subunit 1, mitochondrial (471 aa).

This sequence belongs to the peptidase M16 family.

The protein localises to the mitochondrion matrix. This Caenorhabditis elegans protein is Cytochrome b-c1 complex subunit 1, mitochondrial (ucr-1).